A 122-amino-acid polypeptide reads, in one-letter code: Large ribosomal subunit protein uL18 (122 aa).

This sequence belongs to the universal ribosomal protein uL18 family. Part of the 50S ribosomal subunit; part of the 5S rRNA/L5/L18/L25 subcomplex. Contacts the 5S and 23S rRNAs.

In terms of biological role, this is one of the proteins that bind and probably mediate the attachment of the 5S RNA into the large ribosomal subunit, where it forms part of the central protuberance. This Syntrophotalea carbinolica (strain DSM 2380 / NBRC 103641 / GraBd1) (Pelobacter carbinolicus) protein is Large ribosomal subunit protein uL18.